Here is a 67-residue protein sequence, read N- to C-terminus: MAELPIAPIDRLIRKAGAERVSEDAAKALAEYLEEYAIEVGKKATEFARHAGRKTVKAEDVRLAVKA.

Interaction with DNA regions lie at residues 20 to 22 and 54 to 57; these read RVS and KTVK.

The protein belongs to the archaeal histone HMF family. As to quaternary structure, heterodimer. Dimers then assemble into higher oligomers, with the DNA wrapped around the protein core.

It is found in the cytoplasm. It localises to the chromosome. In terms of biological role, binds and compact DNA (95 to 150 base pairs) to form nucleosome-like structures that contain positive DNA supercoils. Increases the resistance of DNA to thermal denaturation (in vitro). In Thermococcus zilligii, this protein is Archaeal histone HAN1 subunit A (han1A).